The primary structure comprises 264 residues: Zinc finger protein CG30 (264 aa).

The RING-type zinc finger occupies 8–63 (CNICFSVAEIKNYFLQPIDRLTIIPVLELDTCKHQLCSMCIRKIRKRKKVPCPLCR).

It is found in the host nucleus. In terms of biological role, plays a role in the proper expression of late and very late genes. This chain is Zinc finger protein CG30 (CG30), found in Autographa californica nuclear polyhedrosis virus (AcMNPV).